Consider the following 466-residue polypeptide: Siroheme synthase (466 aa).

The segment at 1-203 is precorrin-2 dehydrogenase /sirohydrochlorin ferrochelatase; it reads MNYLPIFIDI…GKIQEAKADL (203 aa). Residues 22–23 and 43–44 each bind NAD(+); these read SI and KS. Phosphoserine is present on Ser128. The uroporphyrinogen-III C-methyltransferase stretch occupies residues 216–466; the sequence is GAVYLVGGGP…FDAKPISSKK (251 aa). Position 225 (Pro225) interacts with S-adenosyl-L-methionine. The active-site Proton acceptor is the Asp248. Lys270 (proton donor) is an active-site residue. Residues 301–303, Ile306, 331–332, Met383, and Gly412 each bind S-adenosyl-L-methionine; these read GGD and TA.

It in the N-terminal section; belongs to the precorrin-2 dehydrogenase / sirohydrochlorin ferrochelatase family. In the C-terminal section; belongs to the precorrin methyltransferase family.

It catalyses the reaction uroporphyrinogen III + 2 S-adenosyl-L-methionine = precorrin-2 + 2 S-adenosyl-L-homocysteine + H(+). The enzyme catalyses precorrin-2 + NAD(+) = sirohydrochlorin + NADH + 2 H(+). It carries out the reaction siroheme + 2 H(+) = sirohydrochlorin + Fe(2+). Its pathway is cofactor biosynthesis; adenosylcobalamin biosynthesis; precorrin-2 from uroporphyrinogen III: step 1/1. It functions in the pathway cofactor biosynthesis; adenosylcobalamin biosynthesis; sirohydrochlorin from precorrin-2: step 1/1. The protein operates within porphyrin-containing compound metabolism; siroheme biosynthesis; precorrin-2 from uroporphyrinogen III: step 1/1. It participates in porphyrin-containing compound metabolism; siroheme biosynthesis; siroheme from sirohydrochlorin: step 1/1. Its pathway is porphyrin-containing compound metabolism; siroheme biosynthesis; sirohydrochlorin from precorrin-2: step 1/1. Its function is as follows. Multifunctional enzyme that catalyzes the SAM-dependent methylations of uroporphyrinogen III at position C-2 and C-7 to form precorrin-2 via precorrin-1. Then it catalyzes the NAD-dependent ring dehydrogenation of precorrin-2 to yield sirohydrochlorin. Finally, it catalyzes the ferrochelation of sirohydrochlorin to yield siroheme. The polypeptide is Siroheme synthase (Vesicomyosocius okutanii subsp. Calyptogena okutanii (strain HA)).